We begin with the raw amino-acid sequence, 493 residues long: 3-octaprenyl-4-hydroxybenzoate carboxy-lyase (493 aa).

Asparagine 172 is a binding site for Mn(2+). Prenylated FMN-binding positions include 175–177 (IYR), 189–191 (RWL), and 194–195 (RG). Residue glutamate 238 participates in Mn(2+) binding. The Proton donor role is filled by aspartate 287.

It belongs to the UbiD family. As to quaternary structure, homohexamer. Requires prenylated FMN as cofactor. It depends on Mn(2+) as a cofactor.

The protein localises to the cell membrane. It catalyses the reaction a 4-hydroxy-3-(all-trans-polyprenyl)benzoate + H(+) = a 2-(all-trans-polyprenyl)phenol + CO2. Its pathway is cofactor biosynthesis; ubiquinone biosynthesis. Catalyzes the decarboxylation of 3-octaprenyl-4-hydroxy benzoate to 2-octaprenylphenol, an intermediate step in ubiquinone biosynthesis. In Shewanella pealeana (strain ATCC 700345 / ANG-SQ1), this protein is 3-octaprenyl-4-hydroxybenzoate carboxy-lyase.